A 289-amino-acid polypeptide reads, in one-letter code: Protease HtpX (289 aa).

2 consecutive transmembrane segments (helical) span residues 5–25 and 33–53; these read IVLF…VMSL and MSGL…ISLL. A Zn(2+)-binding site is contributed by H140. E141 is an active-site residue. Zn(2+) is bound at residue H144. 2 helical membrane passes run 155-175 and 193-213; these read LLQG…GGFI and GIVL…TMWF. E218 is a binding site for Zn(2+).

The protein belongs to the peptidase M48B family. Requires Zn(2+) as cofactor.

The protein localises to the cell inner membrane. This Xylella fastidiosa (strain M23) protein is Protease HtpX.